The primary structure comprises 660 residues: Peroxisomal acyl-coenzyme A oxidase 1 (660 aa).

Phosphoserine is present on Ser-26. Residues Lys-89 and Lys-90 each carry the N6-succinyllysine modification. The FAD site is built by Thr-139 and Gly-178. The residue at position 216 (Lys-216) is an N6-acetyllysine. Lys-241 is subject to N6-succinyllysine. Lys-255, Lys-267, and Lys-272 each carry N6-acetyllysine. Lys-349 bears the N6-succinyllysine mark. The active-site Proton acceptor is Glu-421. N6-acetyllysine; alternate occurs at positions 437 and 446. An N6-succinyllysine; alternate mark is found at Lys-437 and Lys-446. The residue at position 500 (Lys-500) is an N6-acetyllysine. Lys-512 is subject to N6-acetyllysine; alternate. N6-succinyllysine; alternate is present on Lys-512. Residue Lys-542 is modified to N6-succinyllysine. Lys-637 carries the post-translational modification N6-acetyllysine; alternate. Lys-637 carries the post-translational modification N6-succinyllysine; alternate. Lys-643 is subject to N6-succinyllysine. Ser-649 carries the post-translational modification Phosphoserine. The residue at position 651 (Lys-651) is an N6-acetyllysine. The residue at position 654 (Lys-654) is an N6-succinyllysine. The Microbody targeting signal signature appears at Ser-658–Leu-660.

Belongs to the acyl-CoA oxidase family. Homodimer. Interacts with LONP2. FAD serves as cofactor.

It is found in the peroxisome. It carries out the reaction a 2,3-saturated acyl-CoA + O2 = a (2E)-enoyl-CoA + H2O2. The enzyme catalyses hexadecanoyl-CoA + O2 = (2E)-hexadecenoyl-CoA + H2O2. The catalysed reaction is dodecanoyl-CoA + O2 = (2E)-dodecenoyl-CoA + H2O2. It catalyses the reaction octanoyl-CoA + O2 = (2E)-octenoyl-CoA + H2O2. It carries out the reaction decanoyl-CoA + O2 = (2E)-decenoyl-CoA + H2O2. The enzyme catalyses tetradecanoyl-CoA + O2 = (2E)-tetradecenoyl-CoA + H2O2. The catalysed reaction is hexadecanedioyl-CoA + O2 = (2E)-hexadecenedioyl-CoA + H2O2. It catalyses the reaction tetracosanoyl-CoA + O2 = (2E)-tetracosenoyl-CoA + H2O2. It carries out the reaction glutaryl-CoA + O2 = (2E)-glutaconyl-CoA + H2O2. The enzyme catalyses hexanoyl-CoA + O2 = (2E)-hexenoyl-CoA + H2O2. The catalysed reaction is octadecanoyl-CoA + O2 = (2E)-octadecenoyl-CoA + H2O2. It catalyses the reaction (5Z,8Z,11Z,14Z,17Z)-eicosapentaenoyl-CoA + O2 = (2E,5Z,8Z,11Z,14Z,17Z)-icosahexaenoyl-CoA + H2O2. It carries out the reaction (6Z,9Z,12Z,15Z,18Z,21Z)-tetracosahexaenoyl-CoA + O2 = (2E,6Z,9Z,12Z,15Z,18Z,21Z)-tetracosaheptaenoyl-CoA + H2O2. The protein operates within lipid metabolism; peroxisomal fatty acid beta-oxidation. In terms of biological role, involved in the initial and rate-limiting step of peroxisomal beta-oxidation of straight-chain saturated and unsaturated very-long-chain fatty acids. Catalyzes the desaturation of fatty acyl-CoAs such as palmitoyl-CoA (hexadecanoyl-CoA) to 2-trans-enoyl-CoAs ((2E)-enoyl-CoAs) such as (2E)-hexadecenoyl-CoA, and donates electrons directly to molecular oxygen (O(2)), thereby producing hydrogen peroxide (H(2)O(2)). Its function is as follows. Shows highest activity against medium-chain fatty acyl-CoAs. Shows optimum activity with a chain length of 10 carbons (decanoyl-CoA) in vitro. Is active against a much broader range of substrates and shows activity towards long-chain acyl-CoAs. This Pongo abelii (Sumatran orangutan) protein is Peroxisomal acyl-coenzyme A oxidase 1.